A 113-amino-acid polypeptide reads, in one-letter code: MNTMEIEKTNRMNALFEFYAALLTDKQMNYIELYYADDYSLAEIADEFGVSRQAVYDNIKRTEKILETYEMKLHMYSDYVVRSEIFDDMIAHYPHDEYLQEKISILTSIDNRE.

The protein belongs to the UPF0122 family.

Functionally, might take part in the signal recognition particle (SRP) pathway. This is inferred from the conservation of its genetic proximity to ftsY/ffh. May be a regulatory protein. The sequence is that of UPF0122 protein M6_Spy0905 from Streptococcus pyogenes serotype M6 (strain ATCC BAA-946 / MGAS10394).